Consider the following 825-residue polypeptide: Quinic acid utilization activator (825 aa).

The segment covering 1–12 (MSSDTRQTSGGN) has biased composition (polar residues). The tract at residues 1-45 (MSSDTRQTSGGNARSKRRLTDAVDEDGRPTATAEDPTSNPKRQRV) is disordered. A compositionally biased stretch (basic and acidic residues) spans 18–28 (RLTDAVDEDGR). A DNA-binding region (zn(2)-C6 fungal-type) is located at residues 49–76 (CDSCRSKKDKCDGAQPICSTCASLSRPC). 3 disordered regions span residues 160–186 (EQPEGDQERSARGEIDSPADAEESSVL), 204–224 (QSPLASGPSPVRLPRPSTTRL), and 658–683 (GSQRRPRHATQQGTHPRSPMAISLPG). Residues 165–174 (DQERSARGEI) show a composition bias toward basic and acidic residues. Over residues 658–672 (GSQRRPRHATQQGTH) the composition is skewed to polar residues.

The protein resides in the nucleus. Its function is as follows. Transcription activation of genes for enzymes and proteins of quinate metabolism by binding to a 16 base-pair sequence (consensus 5'-GGATAANNNNTTATCC-3') in front of each qut gene. The chain is Quinic acid utilization activator (qutA) from Emericella nidulans (strain FGSC A4 / ATCC 38163 / CBS 112.46 / NRRL 194 / M139) (Aspergillus nidulans).